The following is a 293-amino-acid chain: uncharacterized protein (293 aa).

The region spanning M1 to T58 is the HTH lysR-type domain. Residues M18–Q37 constitute a DNA-binding region (H-T-H motif).

It belongs to the LysR transcriptional regulatory family.

This is an uncharacterized protein from Bacillus subtilis (strain 168).